A 338-amino-acid chain; its full sequence is MDYTRAGARLQVLLGHLGRPSALQIVAHPVSGPASPANFCPEQFQYTLDNNVLSLEQRKFYEENGFLVIKNLVSDDDIQRFRAEFERICRKEVKPPGMTVMKDVAIAKQGYAPSERVVTKIQDFQQNEELFRYCALPQIVKYVECFTGPNIMAMHTMLINKPPDSGKKTSRHPLHQDLHFFPFRPSNLIVCAWTAMEHIDRNNGCLVVLPGTHKGPLKPHDYPKWEGGVNKMYHGIQDYDPDSPRVHLVMEKGDTVFFHPLLIHGSGRNRTQGFRKAISCHYGSSDCKYISVKGTSQENIAREVIEIAEKRYGVQGALDFEDTWKFRCRLVKGERINL.

A peroxisome-targeting transit peptide spans 1–30 (MDYTRAGARLQVLLGHLGRPSALQIVAHPV). An N6-succinyllysine mark is found at Lys-59 and Lys-108. 2-oxoglutarate contacts are provided by residues Lys-120, Met-157, 175-177 (HQD), and Trp-193. 2 residues coordinate Fe cation: His-175 and Asp-177. An N6-succinyllysine mark is found at Lys-231 and Lys-252. His-264 provides a ligand contact to Fe cation. 2-oxoglutarate-binding residues include Ser-266 and Arg-275.

Belongs to the PhyH family. Interacts specifically with FKBP52 and PHYHIP. Requires Fe cation as cofactor. It depends on L-ascorbate as a cofactor. ATP is required as a cofactor. The cofactor is Mg(2+).

It is found in the peroxisome. The enzyme catalyses phytanoyl-CoA + 2-oxoglutarate + O2 = 2-hydroxyphytanoyl-CoA + succinate + CO2. It catalyses the reaction 3-methylhexadecanoyl-CoA + 2-oxoglutarate + O2 = 2-hydroxy-3-methylhexadecanoyl-CoA + succinate + CO2. It carries out the reaction hexadecanoyl-CoA + 2-oxoglutarate + O2 = 2-hydroxyhexadecanoyl-CoA + succinate + CO2. The catalysed reaction is octanoyl-CoA + 2-oxoglutarate + O2 = 2-hydroxyoctanoyl-CoA + succinate + CO2. The enzyme catalyses decanoyl-CoA + 2-oxoglutarate + O2 = 2-hydroxydecanoyl-CoA + succinate + CO2. It catalyses the reaction 3-methylbutanoyl-CoA + 2-oxoglutarate + O2 = 2-hydroxy-3-methylbutanoyl-CoA + succinate + CO2. It carries out the reaction heptadecanoyl-CoA + 2-oxoglutarate + O2 = 2-hydroxyheptadecanoyl-CoA + succinate + CO2. The catalysed reaction is eicosanoyl-CoA + 2-oxoglutarate + O2 = 2-hydroxyeicosanoyl-CoA + succinate + CO2. The enzyme catalyses octadecanoyl-CoA + 2-oxoglutarate + O2 = 2-hydroxyoctadecanoyl-CoA + succinate + CO2. It catalyses the reaction dodecanoyl-CoA + 2-oxoglutarate + O2 = 2-hydroxydodecanoyl-CoA + succinate + CO2. It carries out the reaction tetradecanoyl-CoA + 2-oxoglutarate + O2 = 2-hydroxytetradecanoyl-CoA + succinate + CO2. The catalysed reaction is hexanoyl-CoA + 2-oxoglutarate + O2 = 2-hydroxyhexanoyl-CoA + succinate + CO2. The enzyme catalyses butanoyl-CoA + 2-oxoglutarate + O2 = 2-hydroxybutanoyl-CoA + succinate + CO2. It catalyses the reaction 3-methylnonanoyl-CoA + 2-oxoglutarate + O2 = 2-hydroxy-3-methylnonanoyl-CoA + succinate + CO2. It carries out the reaction 3-methylundecanoyl-CoA + 2-oxoglutarate + O2 = 2-hydroxy-3-methylundecanoyl-CoA + succinate + CO2. The catalysed reaction is 3-methyldodecanoyl-CoA + 2-oxoglutarate + O2 = 2-hydroxy-3-methyldodecanoyl-CoA + succinate + CO2. It participates in lipid metabolism; fatty acid metabolism. Functionally, catalyzes the 2-hydroxylation of racemic phytanoyl-CoA and the isomers of 3-methylhexadecanoyl-CoA. Shows activity also towards a variety of other mono-branched 3-methylacyl-CoA esters (with a chain length of at least seven carbon atoms) and straight-chain acyl-CoA esters (with a chain length longer than four carbon atoms). Does not hydroxylate long and very long straight chain acyl-CoAs or 2-methyl-and 4-methyl-branched acyl-CoAs. The sequence is that of Phytanoyl-CoA dioxygenase, peroxisomal (Phyh) from Rattus norvegicus (Rat).